The following is a 228-amino-acid chain: Ribose-5-phosphate isomerase A (228 aa).

Substrate contacts are provided by residues 32-35 (TGST), 85-88 (DGAD), and 98-101 (KGGG). E107 functions as the Proton acceptor in the catalytic mechanism. K125 is a binding site for substrate.

Belongs to the ribose 5-phosphate isomerase family. As to quaternary structure, homodimer.

The enzyme catalyses aldehydo-D-ribose 5-phosphate = D-ribulose 5-phosphate. Its pathway is carbohydrate degradation; pentose phosphate pathway; D-ribose 5-phosphate from D-ribulose 5-phosphate (non-oxidative stage): step 1/1. Functionally, catalyzes the reversible conversion of ribose-5-phosphate to ribulose 5-phosphate. The protein is Ribose-5-phosphate isomerase A of Cupriavidus pinatubonensis (strain JMP 134 / LMG 1197) (Cupriavidus necator (strain JMP 134)).